The chain runs to 508 residues: BTB/POZ domain-containing protein At3g03510 (508 aa).

The region spanning 11-77 is the BTB domain; sequence QDLDLYVKGV…CYGYKIELSA (67 aa). The region spanning 156–414 is the NPH3 domain; that stretch reads TRLLQDLITL…MQVLFVSQMQ (259 aa). Residue tyrosine 355 is modified to Phosphotyrosine.

This sequence belongs to the NPH3 family.

It participates in protein modification; protein ubiquitination. Functionally, may act as a substrate-specific adapter of an E3 ubiquitin-protein ligase complex (CUL3-RBX1-BTB) which mediates the ubiquitination and subsequent proteasomal degradation of target proteins. The chain is BTB/POZ domain-containing protein At3g03510 from Arabidopsis thaliana (Mouse-ear cress).